The following is a 359-amino-acid chain: Histidinol-phosphate aminotransferase (359 aa).

N6-(pyridoxal phosphate)lysine is present on K220.

It belongs to the class-II pyridoxal-phosphate-dependent aminotransferase family. Histidinol-phosphate aminotransferase subfamily. In terms of assembly, homodimer. Pyridoxal 5'-phosphate serves as cofactor.

The enzyme catalyses L-histidinol phosphate + 2-oxoglutarate = 3-(imidazol-4-yl)-2-oxopropyl phosphate + L-glutamate. It participates in amino-acid biosynthesis; L-histidine biosynthesis; L-histidine from 5-phospho-alpha-D-ribose 1-diphosphate: step 7/9. This Neisseria gonorrhoeae (strain ATCC 700825 / FA 1090) protein is Histidinol-phosphate aminotransferase.